A 221-amino-acid polypeptide reads, in one-letter code: Casparian strip membrane protein 3 (221 aa).

A compositionally biased stretch (basic and acidic residues) spans 1-12; sequence MDIEKAGSRREE. The disordered stretch occupies residues 1–27; sequence MDIEKAGSRREEEEPIVQRPKLDKGKG. Topologically, residues 1-58 are cytoplasmic; sequence MDIEKAGSRREEEEPIVQRPKLDKGKGKAHVFAPPMNYNRIMDKHKQEKMSPAGWKRG. A helical membrane pass occupies residues 59–79; it reads VAIFDFVLRLIAAITAMAAAA. The Extracellular portion of the chain corresponds to 80 to 109; sequence KMATTEETLPFFTQFLQFQADYTDLPTMSS. A helical membrane pass occupies residues 110 to 130; that stretch reads FVIVNSIVGGYLTLSLPFSIV. The Cytoplasmic portion of the chain corresponds to 131–148; the sequence is CILRPLAVPPRLFLILCD. The helical transmembrane segment at 149–169 threads the bilayer; it reads TVMMGLTLMAASASAAIVYLA. Residues 170-194 lie on the Extracellular side of the membrane; the sequence is HNGNSSSNWLPVCQQFGDFCQGTSG. N-linked (GlcNAc...) asparagine glycosylation is present at Asn-173. Residues 195-215 form a helical membrane-spanning segment; that stretch reads AVVASFIAATLLMFLVILSAF. At 216–221 the chain is on the cytoplasmic side; it reads ALKRTT.

Belongs to the Casparian strip membrane proteins (CASP) family. In terms of assembly, homodimer and heterodimers with other CASP proteins. Interacts with CASP1, CASP2, CASP4 and CASP5.

The protein resides in the cell membrane. In terms of biological role, regulates membrane-cell wall junctions and localized cell wall deposition. Required for establishment of the Casparian strip membrane domain (CSD) and the subsequent formation of Casparian strips, a cell wall modification of the root endodermis that determines an apoplastic barrier between the intraorganismal apoplasm and the extraorganismal apoplasm and prevents lateral diffusion. The polypeptide is Casparian strip membrane protein 3 (CASP3) (Arabidopsis thaliana (Mouse-ear cress)).